Here is a 382-residue protein sequence, read N- to C-terminus: Chorismate synthase (382 aa).

2 residues coordinate NADP(+): Arg-39 and Arg-45. Residues 128-130 (RAS), 246-247 (QA), Ala-290, 305-309 (KPIAT), and Arg-331 contribute to the FMN site.

This sequence belongs to the chorismate synthase family. As to quaternary structure, homotetramer. The cofactor is FMNH2.

It catalyses the reaction 5-O-(1-carboxyvinyl)-3-phosphoshikimate = chorismate + phosphate. The protein operates within metabolic intermediate biosynthesis; chorismate biosynthesis; chorismate from D-erythrose 4-phosphate and phosphoenolpyruvate: step 7/7. Catalyzes the anti-1,4-elimination of the C-3 phosphate and the C-6 proR hydrogen from 5-enolpyruvylshikimate-3-phosphate (EPSP) to yield chorismate, which is the branch point compound that serves as the starting substrate for the three terminal pathways of aromatic amino acid biosynthesis. This reaction introduces a second double bond into the aromatic ring system. The sequence is that of Chorismate synthase from Deinococcus geothermalis (strain DSM 11300 / CIP 105573 / AG-3a).